Reading from the N-terminus, the 221-residue chain is Leucyl/phenylalanyl-tRNA--protein transferase (221 aa).

Belongs to the L/F-transferase family.

It is found in the cytoplasm. The catalysed reaction is N-terminal L-lysyl-[protein] + L-leucyl-tRNA(Leu) = N-terminal L-leucyl-L-lysyl-[protein] + tRNA(Leu) + H(+). The enzyme catalyses N-terminal L-arginyl-[protein] + L-leucyl-tRNA(Leu) = N-terminal L-leucyl-L-arginyl-[protein] + tRNA(Leu) + H(+). It carries out the reaction L-phenylalanyl-tRNA(Phe) + an N-terminal L-alpha-aminoacyl-[protein] = an N-terminal L-phenylalanyl-L-alpha-aminoacyl-[protein] + tRNA(Phe). Its function is as follows. Functions in the N-end rule pathway of protein degradation where it conjugates Leu, Phe and, less efficiently, Met from aminoacyl-tRNAs to the N-termini of proteins containing an N-terminal arginine or lysine. This chain is Leucyl/phenylalanyl-tRNA--protein transferase, found in Phenylobacterium zucineum (strain HLK1).